The following is a 306-amino-acid chain: Protein STPG3 (306 aa).

Residues 210–230 (CSYTPLLPTSKPSGEKRPSPN) are disordered.

The protein is Protein STPG3 of Mus musculus (Mouse).